A 353-amino-acid chain; its full sequence is Phosphate acyltransferase (353 aa).

The protein belongs to the PlsX family. As to quaternary structure, homodimer. Probably interacts with PlsY.

It localises to the cytoplasm. The enzyme catalyses a fatty acyl-[ACP] + phosphate = an acyl phosphate + holo-[ACP]. The protein operates within lipid metabolism; phospholipid metabolism. Its function is as follows. Catalyzes the reversible formation of acyl-phosphate (acyl-PO(4)) from acyl-[acyl-carrier-protein] (acyl-ACP). This enzyme utilizes acyl-ACP as fatty acyl donor, but not acyl-CoA. The protein is Phosphate acyltransferase of Bradyrhizobium sp. (strain BTAi1 / ATCC BAA-1182).